Reading from the N-terminus, the 474-residue chain is Proline--tRNA ligase (474 aa).

It belongs to the class-II aminoacyl-tRNA synthetase family. ProS type 3 subfamily. In terms of assembly, homodimer.

It localises to the cytoplasm. It carries out the reaction tRNA(Pro) + L-proline + ATP = L-prolyl-tRNA(Pro) + AMP + diphosphate. Functionally, catalyzes the attachment of proline to tRNA(Pro) in a two-step reaction: proline is first activated by ATP to form Pro-AMP and then transferred to the acceptor end of tRNA(Pro). The chain is Proline--tRNA ligase from Onion yellows phytoplasma (strain OY-M).